Here is a 973-residue protein sequence, read N- to C-terminus: GATOR2 complex protein WDR59 (973 aa).

WD repeat units lie at residues Q57 to C98, G103 to V143, S146 to E185, A189 to N229, P232 to H276, and G280 to C324. A disordered region spans residues D346–E365. A compositionally biased stretch (polar residues) spans P351–S360. The 102-residue stretch at Q393–V494 folds into the RWD domain. The segment at Y900–T920 adopts a C4-type zinc-finger fold. Positions 901, 904, 913, 916, 926, 937, 942, 945, 948, 959, 963, 965, and 967 each coordinate Zn(2+). Residues F921–E970 form an RING-type; atypical zinc finger.

This sequence belongs to the WD repeat WDR59 family. Component of the GATOR2 subcomplex, composed of MIOS, SEC13, SEH1L, WDR24 and WDR59. The GATOR2 complex interacts with CASTOR1 and CASTOR2; the interaction is negatively regulated by arginine. The GATOR2 complex interacts with SESN1, SESN2 and SESN3; the interaction is negatively regulated by amino acids. Interacts with DDB1-CUL4A/B E3 ligase complexes.

It localises to the lysosome membrane. The GATOR2 complex is negatively regulated by the upstream amino acid sensors CASTOR1 and SESN2, which sequester the GATOR2 complex in absence of amino acids. In the presence of abundant amino acids, GATOR2 is released from CASTOR1 and SESN2 and activated. Its function is as follows. As a component of the GATOR2 complex, functions as an activator of the amino acid-sensing branch of the mTORC1 signaling pathway. The GATOR2 complex indirectly activates mTORC1 through the inhibition of the GATOR1 subcomplex. GATOR2 probably acts as an E3 ubiquitin-protein ligase toward GATOR1. In the presence of abundant amino acids, the GATOR2 complex mediates ubiquitination of the NPRL2 core component of the GATOR1 complex, leading to GATOR1 inactivation. In the absence of amino acids, GATOR2 is inhibited, activating the GATOR1 complex. In Gallus gallus (Chicken), this protein is GATOR2 complex protein WDR59.